Consider the following 329-residue polypeptide: Sex comb on midleg-like protein 1 (329 aa).

Phosphoserine is present on residues serine 138 and serine 238. One can recognise an SAM domain in the interval 258–325 (WSVEAVVLFL…YYIDRLKQGK (68 aa)).

Belongs to the SCM family.

It is found in the nucleus. Functionally, putative Polycomb group (PcG) protein. PcG proteins act by forming multiprotein complexes, which are required to maintain the transcriptionally repressive state of homeotic genes throughout development. May be involved in spermatogenesis during sexual maturation. The chain is Sex comb on midleg-like protein 1 (SCML1) from Hoolock hoolock (Western hoolock gibbon).